The chain runs to 186 residues: Protein GrpE (186 aa).

A compositionally biased stretch (basic and acidic residues) spans 1–17 (MKDEHNQEHDLSQKELE). Residues 1-32 (MKDEHNQEHDLSQKELESCENSCTCEGKKQEA) form a disordered region.

The protein belongs to the GrpE family. In terms of assembly, homodimer.

The protein resides in the cytoplasm. Participates actively in the response to hyperosmotic and heat shock by preventing the aggregation of stress-denatured proteins, in association with DnaK and GrpE. It is the nucleotide exchange factor for DnaK and may function as a thermosensor. Unfolded proteins bind initially to DnaJ; upon interaction with the DnaJ-bound protein, DnaK hydrolyzes its bound ATP, resulting in the formation of a stable complex. GrpE releases ADP from DnaK; ATP binding to DnaK triggers the release of the substrate protein, thus completing the reaction cycle. Several rounds of ATP-dependent interactions between DnaJ, DnaK and GrpE are required for fully efficient folding. This Helicobacter acinonychis (strain Sheeba) protein is Protein GrpE.